We begin with the raw amino-acid sequence, 553 residues long: Methionine--tRNA ligase (553 aa).

A 'HIGH' region motif is present at residues 12–22 (PYANSQLHLGH). Zn(2+) is bound by residues Cys-144, Cys-147, Cys-157, and Cys-160. The 'KMSKS' region signature appears at 332-336 (KFSKS). Lys-335 provides a ligand contact to ATP.

The protein belongs to the class-I aminoacyl-tRNA synthetase family. MetG type 1 subfamily. Monomer. It depends on Zn(2+) as a cofactor.

It localises to the cytoplasm. It catalyses the reaction tRNA(Met) + L-methionine + ATP = L-methionyl-tRNA(Met) + AMP + diphosphate. Its function is as follows. Is required not only for elongation of protein synthesis but also for the initiation of all mRNA translation through initiator tRNA(fMet) aminoacylation. The chain is Methionine--tRNA ligase from Dehalococcoides mccartyi (strain ATCC BAA-2100 / JCM 16839 / KCTC 5957 / BAV1).